An 89-amino-acid chain; its full sequence is Small ribosomal subunit protein uS15 (89 aa).

The protein belongs to the universal ribosomal protein uS15 family. As to quaternary structure, part of the 30S ribosomal subunit. Forms a bridge to the 50S subunit in the 70S ribosome, contacting the 23S rRNA.

Its function is as follows. One of the primary rRNA binding proteins, it binds directly to 16S rRNA where it helps nucleate assembly of the platform of the 30S subunit by binding and bridging several RNA helices of the 16S rRNA. Functionally, forms an intersubunit bridge (bridge B4) with the 23S rRNA of the 50S subunit in the ribosome. This chain is Small ribosomal subunit protein uS15, found in Geobacillus thermodenitrificans (strain NG80-2).